Consider the following 1274-residue polypeptide: Clustered mitochondria protein homolog (1274 aa).

A disordered region spans residues 1–53; sequence MAQTNGELEHSKGMSSPAVRISQAQKSTKLTVDPESPEQVANGTHAEGEQPEE. 3 TPR repeats span residues 293 to 326, 510 to 543, and 628 to 661; these read SPSF…PNNP, DYGG…KKHP, and AKEA…ERVD. Positions 342 to 586 constitute a Clu domain; the sequence is DITRSQENYL…RVTPLDVMWQ (245 aa). Disordered regions lie at residues 631–655 and 893–925; these read AAKK…EEAL and VSNG…ARAA. 4 TPR repeats span residues 998–1031, 1040–1073, 1082–1115, and 1124–1157; these read AKLY…TERT, ILSY…WKII, ITTM…CESL, and ATIL…FLQQ. Positions 1197–1274 are disordered; the sequence is INMTPRTLGT…KLRGSKKSSA (78 aa). Positions 1200-1217 are enriched in polar residues; it reads TPRTLGTRVQPQVGQTAP.

The protein belongs to the CLU family. In terms of assembly, may associate with the eukaryotic translation initiation factor 3 (eIF-3) complex.

It is found in the cytoplasm. In terms of biological role, mRNA-binding protein involved in proper cytoplasmic distribution of mitochondria. In Aspergillus terreus (strain NIH 2624 / FGSC A1156), this protein is Clustered mitochondria protein homolog.